A 271-amino-acid chain; its full sequence is Undecaprenyl-diphosphatase (271 aa).

The next 8 helical transmembrane spans lie at 5–25 (LLIK…LPIS), 43–63 (FATM…VYYF), 80–100 (GFNL…IGIL), 109–129 (LFSP…MIVI), 145–165 (VSTS…FPGM), 186–206 (AEFS…FELV), 215–235 (LEWE…LIVV), and 246–266 (VLKP…FLIA).

This sequence belongs to the UppP family.

The protein resides in the cell membrane. It carries out the reaction di-trans,octa-cis-undecaprenyl diphosphate + H2O = di-trans,octa-cis-undecaprenyl phosphate + phosphate + H(+). In terms of biological role, catalyzes the dephosphorylation of undecaprenyl diphosphate (UPP). Confers resistance to bacitracin. The protein is Undecaprenyl-diphosphatase of Caldanaerobacter subterraneus subsp. tengcongensis (strain DSM 15242 / JCM 11007 / NBRC 100824 / MB4) (Thermoanaerobacter tengcongensis).